A 1167-amino-acid chain; its full sequence is Rhoptry neck protein 2-like protein 2 (1167 aa).

Positions 1–20 (MSSNLAFLSLSLAESTASLG) are cleaved as a signal peptide. Residues 21–977 (KSLEETRTRL…WVAKRSRSRK (957 aa)) are Cytoplasmic-facing. A disordered region spans residues 55–94 (GPGLSVEGKQTEQMSRKSAEDTRASSLSSDPDDGRAAQLA). Residues 68–77 (MSRKSAEDTR) are compositionally biased toward basic and acidic residues. Residues 978-998 (LAIVSVLSLGLIFAYTLLSAL) traverse the membrane as a helical segment. Over 999–1167 (DIAQFLTDSG…TPQRAQDGSR (169 aa)) the chain is Extracellular. Cysteines 1015 and 1026 form a disulfide.

This sequence belongs to the apicomplexan parasites RON2 family.

It localises to the secreted. The protein localises to the host cell membrane. Functionally, may play a role in host cell invasion. The chain is Rhoptry neck protein 2-like protein 2 (RON2L2) from Toxoplasma gondii (strain ATCC 50611 / Me49).